A 290-amino-acid polypeptide reads, in one-letter code: Glycine--tRNA ligase alpha subunit (290 aa).

Belongs to the class-II aminoacyl-tRNA synthetase family. As to quaternary structure, tetramer of two alpha and two beta subunits.

It is found in the cytoplasm. The catalysed reaction is tRNA(Gly) + glycine + ATP = glycyl-tRNA(Gly) + AMP + diphosphate. The polypeptide is Glycine--tRNA ligase alpha subunit (Zymomonas mobilis subsp. mobilis (strain ATCC 31821 / ZM4 / CP4)).